An 86-amino-acid chain; its full sequence is Large ribosomal subunit protein bL27 (86 aa).

Residues 1-23 form a disordered region; it reads MAHKKAGGSTRNGRDSESKRLGV.

Belongs to the bacterial ribosomal protein bL27 family.

The chain is Large ribosomal subunit protein bL27 from Alkalilimnicola ehrlichii (strain ATCC BAA-1101 / DSM 17681 / MLHE-1).